Consider the following 2051-residue polypeptide: Fatty acid synthase subunit beta (2051 aa).

Position 1 is an N-acetylmethionine (methionine 1). The segment at 1–468 is acetyltransferase; it reads MDAYSTRPLT…VYDTFDGSDL (468 aa). Serine 274 serves as the catalytic For acetyltransferase activity. Residues 480–868 are enoyl reductase; the sequence is VDCIIRLPVK…TRGVMLWKEF (389 aa). Threonine 733 carries the phosphothreonine modification. Serine 1121 bears the Phosphoserine mark. The dehydratase stretch occupies residues 1144 to 1626; it reads GSEINWRHAS…LPNTALKTSI (483 aa). A Glycyl lysine isopeptide (Lys-Gly) (interchain with G-Cter in ubiquitin) cross-link involves residue lysine 1364. Residues 1523–1648 form the MaoC-like domain; that stretch reads NGSTLEQKVN…KFETRNEDDV (126 aa). Residues 1627–1845 form a malonyl/palmitoyl transferase region; it reads QHVGMINGRK…MTMQVAVPRD (219 aa). Serine 1808 functions as the For malonyltransferase activity in the catalytic mechanism.

This sequence belongs to the fungal fatty acid synthetase subunit beta family. As to quaternary structure, [Alpha(6)beta(6)] hexamers of two multifunctional subunits (alpha and beta).

The catalysed reaction is acetyl-CoA + n malonyl-CoA + 2n NADPH + 4n H(+) = a long-chain-acyl-CoA + n CoA + n CO2 + 2n NADP(+).. It catalyses the reaction holo-[ACP] + acetyl-CoA = acetyl-[ACP] + CoA. It carries out the reaction holo-[ACP] + malonyl-CoA = malonyl-[ACP] + CoA. The enzyme catalyses a (3R)-hydroxyacyl-[ACP] = a (2E)-enoyl-[ACP] + H2O. The catalysed reaction is a 2,3-saturated acyl-[ACP] + NAD(+) = a (2E)-enoyl-[ACP] + NADH + H(+). It catalyses the reaction (9Z)-octadecenoyl-[ACP] + H2O = (9Z)-octadecenoate + holo-[ACP] + H(+). Functionally, fatty acid synthetase catalyzes the formation of long-chain fatty acids from acetyl-CoA, malonyl-CoA and NADPH. The beta subunit contains domains for: [acyl-carrier-protein] acetyltransferase and malonyltransferase, S-acyl fatty acid synthase thioesterase, enoyl-[acyl-carrier-protein] reductase, and 3-hydroxypalmitoyl-[acyl-carrier-protein] dehydratase. The polypeptide is Fatty acid synthase subunit beta (FAS1) (Saccharomyces cerevisiae (strain ATCC 204508 / S288c) (Baker's yeast)).